The sequence spans 275 residues: uncharacterized protein (275 aa).

Residues 75–157 are a coiled coil; it reads AKELIKNRRL…AELKQAAEQG (83 aa).

This is an uncharacterized protein from Bacillus subtilis (strain 168).